Here is a 170-residue protein sequence, read N- to C-terminus: MGILSGNPQDEPMHYGEVFGLWSYVMAGNKMVGNYQMLLNHVGDDDLKKLLRESIEKCQDEIKQVSTILKENGVALPPASPEPPTADLNDIPPGARFLDPDVAASAAAENAAGLVTCSKMMGQSIREDIAMMFGQFHMSKAATGAKYLRLLKNKGWLIPPPLHLQKHHEA.

This is an uncharacterized protein from Bacillus subtilis (strain 168).